The primary structure comprises 132 residues: Small ribosomal subunit protein uS8c (132 aa).

It belongs to the universal ribosomal protein uS8 family. Part of the 30S ribosomal subunit.

The protein resides in the plastid. It is found in the chloroplast. One of the primary rRNA binding proteins, it binds directly to 16S rRNA central domain where it helps coordinate assembly of the platform of the 30S subunit. In Phaeodactylum tricornutum (strain CCAP 1055/1), this protein is Small ribosomal subunit protein uS8c (rps8).